A 247-amino-acid polypeptide reads, in one-letter code: ATP synthase subunit a, chloroplastic (247 aa).

5 helical membrane passes run 38-58 (QVLITSWVVIAILLGSVTVAV), 95-115 (VPFIGTMFLFIFVSNWSGALL), 134-154 (INTTVALALPTSVAYFYAGLT), 199-219 (LVVVVLVSLVPLVVPIPVMFL), and 220-240 (GLFTSGIQALIFATLAAAYIG).

Belongs to the ATPase A chain family. As to quaternary structure, F-type ATPases have 2 components, CF(1) - the catalytic core - and CF(0) - the membrane proton channel. CF(1) has five subunits: alpha(3), beta(3), gamma(1), delta(1), epsilon(1). CF(0) has four main subunits: a, b, b' and c.

The protein localises to the plastid. It is found in the chloroplast thylakoid membrane. Key component of the proton channel; it plays a direct role in the translocation of protons across the membrane. In Acorus calamus var. americanus (American sweet flag), this protein is ATP synthase subunit a, chloroplastic.